Here is a 472-residue protein sequence, read N- to C-terminus: FAD-dependent monooxygenase ltmM (472 aa).

Residues valine 7–glycine 27 form a helical membrane-spanning segment. FAD-binding residues include glutamate 34, glycine 48, and arginine 107. Asparagine 186 is a glycosylation site (N-linked (GlcNAc...) asparagine). The FAD site is built by aspartate 306 and alanine 319. A helical transmembrane segment spans residues isoleucine 450–leucine 470.

The protein belongs to the paxM FAD-dependent monooxygenase family. The cofactor is FAD.

It localises to the membrane. It functions in the pathway secondary metabolite biosynthesis. Functionally, FAD-dependent monooxygenase; part of the gene cluster that mediates the biosynthesis of lolitrems, indole-diterpene mycotoxins that are potent tremorgens in mammals, and are synthesized by clavicipitaceous fungal endophytes in association with their grass hosts. The geranylgeranyl diphosphate (GGPP) synthase ltmG is proposed to catalyze the first step in lolitremB biosynthesis. LtmG catalyzes a series of iterative condensations of isopentenyl diphosphate (IPP) with dimethylallyl diphosphate (DMAPP), geranyl diphosphate (GPP), and farnesyl diphosphate (FPP), to form GGPP. GGPP then condenses with indole-3-glycerol phosphate to form 3-geranylgeranylindole, an acyclic intermediate, to be incorporated into paxilline. Either ltmG or ltmC could be responsible for this step, as both are putative prenyl transferases. The FAD-dependent monooxygenase ltmM then catalyzes the epoxidation of the two terminal alkenes of the geranylgeranyl moiety, which is subsequently cyclized by ltmB, to paspaline. The cytochrome P450 monooxygenases ltmQ and ltmP can sequentially oxidize paspaline to terpendole E and terpendole F. Alternatively, ltmP converts paspaline to an intermediate which is oxidized by ltmQ to terpendole F. LtmF, ltmK, ltmE and ltmJ appear to be unique to the epichloe endophytes. The prenyltransferase ltmF is involved in the 27-hydroxyl-O-prenylation. The cytochrome P450 monooxygenase ltmK is required for the oxidative acetal ring formation. The multi-functional prenyltransferase ltmE is required for C20- and C21-prenylations of the indole ring of paspalanes and acts together with the cytochrome P450 monooxygenase ltmJ to yield lolitremanes by multiple oxidations and ring closures. The stereoisomer pairs of lolitriol and lolitrem N or lolitrem B and lolitrem F may be attributed to variations in the way in which ring closure can occur under the action of ltmJ. While the major product of this pathway is lolitrem B, the prenyl transferases and cytochrome P450 monooxygenases identified in this pathway have a remarkable versatility in their regio- and stereo-specificities to generate a diverse range of metabolites that are products of a metabolic grid rather than a linear pathway. The sequence is that of FAD-dependent monooxygenase ltmM (ltmM) from Epichloe festucae var. lolii (Neotyphodium lolii).